The following is a 295-amino-acid chain: Phosphoribosylaminoimidazole-succinocarboxamide synthase (295 aa).

The protein belongs to the SAICAR synthetase family.

The enzyme catalyses 5-amino-1-(5-phospho-D-ribosyl)imidazole-4-carboxylate + L-aspartate + ATP = (2S)-2-[5-amino-1-(5-phospho-beta-D-ribosyl)imidazole-4-carboxamido]succinate + ADP + phosphate + 2 H(+). It functions in the pathway purine metabolism; IMP biosynthesis via de novo pathway; 5-amino-1-(5-phospho-D-ribosyl)imidazole-4-carboxamide from 5-amino-1-(5-phospho-D-ribosyl)imidazole-4-carboxylate: step 1/2. This Nitrosomonas europaea (strain ATCC 19718 / CIP 103999 / KCTC 2705 / NBRC 14298) protein is Phosphoribosylaminoimidazole-succinocarboxamide synthase.